Consider the following 495-residue polypeptide: MIPVIALVGRPNVGKSTLFNRLTHTRDALVADFPGLTRDRKYGRAEVEGHEFIVVDTGGIDGTEDGVETKMAGQSLLAIEEADIVLFMVDARAGLMPADQGIAQHLRSREKATFLVANKTDGIDPDTATADFYSLGLGEVHAIAASHGRGVTQLIEDVMAPYMDAEEPEVELTDEEENAAYWAEQEAQGEDVPPEDPEDDFDPRTLPIKLAIVGRPNVGKSTLTNRILGEDRVVVYDMPGTTRDSIYIPMTRDDREYILIDTAGVRKRGKITETVEKFSVIKTLQAIEDSNVVLLVIDARDGISDQDLSLLGFILNSGRSLVIAVNKWDGMTEEARAQVKDMLDLRLGFVDFARIHFISALHGSGVGNLFESVQEAYDCSTKRVGTSLLTRIMQMAEEDHQPPLVRGRRVKLKYAHAGGYNPPIVVIHGNQVTDLSDSYKRYLMNYFRRSLKVMGTPIRIQFKEGENPFAGKRNPLTPNQMRKRKRLMSHLKKGK.

EngA-type G domains follow at residues 3-166 (PVIA…MDAE) and 208-381 (IKLA…DCST). Residues 9 to 16 (GRPNVGKS), 56 to 60 (DTGGI), 118 to 121 (NKTD), 214 to 221 (GRPNVGKS), 261 to 265 (DTAGV), and 326 to 329 (NKWD) each bind GTP. The 85-residue stretch at 382–466 (KRVGTSLLTR…PIRIQFKEGE (85 aa)) folds into the KH-like domain.

The protein belongs to the TRAFAC class TrmE-Era-EngA-EngB-Septin-like GTPase superfamily. EngA (Der) GTPase family. As to quaternary structure, associates with the 50S ribosomal subunit.

Its function is as follows. GTPase that plays an essential role in the late steps of ribosome biogenesis. This Yersinia pseudotuberculosis serotype IB (strain PB1/+) protein is GTPase Der.